We begin with the raw amino-acid sequence, 260 residues long: Type II methyltransferase M1.MboII (260 aa).

S-adenosyl-L-methionine contacts are provided by residues Cys-12, Asp-30, Lys-197, 223–225 (SGT), and 241–242 (DM).

This sequence belongs to the N(4)/N(6)-methyltransferase family. As to quaternary structure, at low concentration exists as a monomer and homodimer. Probably binds to DNA as a monomer.

It catalyses the reaction a 2'-deoxyadenosine in DNA + S-adenosyl-L-methionine = an N(6)-methyl-2'-deoxyadenosine in DNA + S-adenosyl-L-homocysteine + H(+). A beta subtype methylase that recognizes the double-stranded sequence 5'-GAAGA-3', methylates A-5 on the top strand, and protects the DNA from cleavage by the MboII endonuclease. It is not known if the cytosine of the complementary sequence TCTTC is also methylated by this enzyme. The polypeptide is Type II methyltransferase M1.MboII (Moraxella bovis).